We begin with the raw amino-acid sequence, 425 residues long: 2-methylserine hydroxymethyltransferase (425 aa).

Residues Leu-126 and Gly-130–Leu-132 contribute to the (6S)-5,6,7,8-tetrahydrofolate site. Lys-235 is subject to N6-(pyridoxal phosphate)lysine. Glu-251 contacts (6S)-5,6,7,8-tetrahydrofolate.

This sequence belongs to the SHMT family. As to quaternary structure, homodimer. It depends on pyridoxal 5'-phosphate as a cofactor.

The protein resides in the cytoplasm. The enzyme catalyses (6R)-5,10-methylene-5,6,7,8-tetrahydrofolate + D-alanine + H2O = 2-methylserine + (6S)-5,6,7,8-tetrahydrofolate. It functions in the pathway one-carbon metabolism; tetrahydrofolate interconversion. Functionally, catalyzes the reversible interconversion of alpha-methyl-L-serine to D-alanine with tetrahydrofolate (THF) serving as the one-carbon carrier. Cannot use alpha-methyl-D-serine, L-serine, D-serine or L-alanine. The chain is 2-methylserine hydroxymethyltransferase from Ensifer sp.